Consider the following 165-residue polypeptide: Cytochrome c-type biogenesis protein CcmE (165 aa).

Topologically, residues 1-29 (MSATAEQNARNPKGKGGFARTVSQRKRKR) are cytoplasmic. A helical; Signal-anchor for type II membrane protein membrane pass occupies residues 30 to 50 (LFLIGGALAVLAVAVGLMLTA). Residues 51–165 (FNQDIRFFRT…LKKKGVWEGK (115 aa)) lie on the Periplasmic side of the membrane. The heme site is built by His143 and Tyr147.

This sequence belongs to the CcmE/CycJ family.

The protein resides in the cell inner membrane. In terms of biological role, heme chaperone required for the biogenesis of c-type cytochromes. Transiently binds heme delivered by CcmC and transfers the heme to apo-cytochromes in a process facilitated by CcmF and CcmH. This is Cytochrome c-type biogenesis protein CcmE from Brucella canis (strain ATCC 23365 / NCTC 10854 / RM-666).